A 60-amino-acid polypeptide reads, in one-letter code: Large ribosomal subunit protein uL30 (60 aa).

This sequence belongs to the universal ribosomal protein uL30 family. In terms of assembly, part of the 50S ribosomal subunit.

The sequence is that of Large ribosomal subunit protein uL30 from Bacillus pumilus (strain SAFR-032).